Consider the following 293-residue polypeptide: SAGA-associated factor 29 (293 aa).

Residues 3–88 (LVSADSRIAE…KALDKIAEIK (86 aa)) are a coiled coil. In terms of domain architecture, SGF29 C-terminal spans 152 to 293 (GDYVARPGDK…VVACKEPKKK (142 aa)). 2 histone H3K4me3 N-terminus binding regions span residues 194 to 196 (DID) and 240 to 243 (QTTC). Residues 264 to 266 (FED) are histone H3K4me3 binding. Lys288 carries the post-translational modification N6-acetyllysine.

This sequence belongs to the SGF29 family. Interacts with dimethylated and trimethylated 'Lys-4' of histone H3 (H3K4me2 and H3K4me3), with a preference for the trimethylated form (H3K4me3). Component of some SAGA-type complexes. Component of the ADA2A-containing complex (ATAC), composed of KAT14, KAT2A, TADA2L, TADA3L, ZZ3, MBIP, WDR5, YEATS2, CCDC101 and DR1. Interacts with (methylated) CGAS. Interacts with TADA3L, GCN5L2, SUPT3H and MYC.

It localises to the nucleus. In terms of biological role, chromatin reader component of some histone acetyltransferase (HAT) SAGA-type complexes like the TFTC-HAT, ATAC or STAGA complexes. SGF29 specifically recognizes and binds methylated 'Lys-4' of histone H3 (H3K4me), with a preference for trimethylated form (H3K4me3). In the SAGA-type complexes, SGF29 is required to recruit complexes to H3K4me. Involved in the response to endoplasmic reticulum (ER) stress by recruiting the SAGA complex to H3K4me, thereby promoting histone H3 acetylation and cell survival. Also binds non-histone proteins that are methylated on Lys residues: specifically recognizes and binds CGAS monomethylated on 'Lys-506'. The polypeptide is SAGA-associated factor 29 (Homo sapiens (Human)).